The following is a 208-amino-acid chain: Large ribosomal subunit protein bL25 (208 aa).

Residues 186-201 (PAGEKSAAAEEGAAAA) are compositionally biased toward low complexity. Residues 186-208 (PAGEKSAAAEEGAAAAGEDKPAA) form a disordered region.

The protein belongs to the bacterial ribosomal protein bL25 family. CTC subfamily. In terms of assembly, part of the 50S ribosomal subunit; part of the 5S rRNA/L5/L18/L25 subcomplex. Contacts the 5S rRNA. Binds to the 5S rRNA independently of L5 and L18.

This is one of the proteins that binds to the 5S RNA in the ribosome where it forms part of the central protuberance. The protein is Large ribosomal subunit protein bL25 of Ralstonia pickettii (strain 12J).